Here is a 217-residue protein sequence, read N- to C-terminus: Thiamine-phosphate synthase (217 aa).

4-amino-2-methyl-5-(diphosphooxymethyl)pyrimidine is bound by residues 45 to 49 and asparagine 81; that span reads QFRQK. Mg(2+) contacts are provided by aspartate 82 and aspartate 101. Residue serine 120 coordinates 4-amino-2-methyl-5-(diphosphooxymethyl)pyrimidine. 147–149 is a binding site for 2-[(2R,5Z)-2-carboxy-4-methylthiazol-5(2H)-ylidene]ethyl phosphate; it reads TPS. Lysine 150 is a binding site for 4-amino-2-methyl-5-(diphosphooxymethyl)pyrimidine. 2-[(2R,5Z)-2-carboxy-4-methylthiazol-5(2H)-ylidene]ethyl phosphate-binding positions include glycine 179 and 197-198; that span reads IS.

This sequence belongs to the thiamine-phosphate synthase family. Mg(2+) serves as cofactor.

The catalysed reaction is 2-[(2R,5Z)-2-carboxy-4-methylthiazol-5(2H)-ylidene]ethyl phosphate + 4-amino-2-methyl-5-(diphosphooxymethyl)pyrimidine + 2 H(+) = thiamine phosphate + CO2 + diphosphate. The enzyme catalyses 2-(2-carboxy-4-methylthiazol-5-yl)ethyl phosphate + 4-amino-2-methyl-5-(diphosphooxymethyl)pyrimidine + 2 H(+) = thiamine phosphate + CO2 + diphosphate. It carries out the reaction 4-methyl-5-(2-phosphooxyethyl)-thiazole + 4-amino-2-methyl-5-(diphosphooxymethyl)pyrimidine + H(+) = thiamine phosphate + diphosphate. Its pathway is cofactor biosynthesis; thiamine diphosphate biosynthesis; thiamine phosphate from 4-amino-2-methyl-5-diphosphomethylpyrimidine and 4-methyl-5-(2-phosphoethyl)-thiazole: step 1/1. In terms of biological role, condenses 4-methyl-5-(beta-hydroxyethyl)thiazole monophosphate (THZ-P) and 2-methyl-4-amino-5-hydroxymethyl pyrimidine pyrophosphate (HMP-PP) to form thiamine monophosphate (TMP). The chain is Thiamine-phosphate synthase from Helicobacter pylori (strain J99 / ATCC 700824) (Campylobacter pylori J99).